A 504-amino-acid chain; its full sequence is UDP-N-acetylmuramoylalanine--D-glutamate ligase (504 aa).

129-135 (GTNGKTT) is a binding site for ATP.

Belongs to the MurCDEF family.

Its subcellular location is the cytoplasm. It catalyses the reaction UDP-N-acetyl-alpha-D-muramoyl-L-alanine + D-glutamate + ATP = UDP-N-acetyl-alpha-D-muramoyl-L-alanyl-D-glutamate + ADP + phosphate + H(+). The protein operates within cell wall biogenesis; peptidoglycan biosynthesis. Cell wall formation. Catalyzes the addition of glutamate to the nucleotide precursor UDP-N-acetylmuramoyl-L-alanine (UMA). The chain is UDP-N-acetylmuramoylalanine--D-glutamate ligase from Burkholderia mallei (strain ATCC 23344).